A 415-amino-acid polypeptide reads, in one-letter code: Multifunctional CCA protein (415 aa).

ATP contacts are provided by Gly8 and Arg11. The CTP site is built by Gly8 and Arg11. Residues Glu21 and Asp23 each contribute to the Mg(2+) site. ATP is bound by residues Arg91, Arg137, and Arg140. CTP-binding residues include Arg91, Arg137, and Arg140. Positions 226–327 (TGIHTLMTVS…IKLFSAIDVW (102 aa)) constitute an HD domain.

It belongs to the tRNA nucleotidyltransferase/poly(A) polymerase family. Bacterial CCA-adding enzyme type 1 subfamily. Monomer. Can also form homodimers and oligomers. It depends on Mg(2+) as a cofactor. Ni(2+) serves as cofactor.

It carries out the reaction a tRNA precursor + 2 CTP + ATP = a tRNA with a 3' CCA end + 3 diphosphate. The enzyme catalyses a tRNA with a 3' CCA end + 2 CTP + ATP = a tRNA with a 3' CCACCA end + 3 diphosphate. Catalyzes the addition and repair of the essential 3'-terminal CCA sequence in tRNAs without using a nucleic acid template. Adds these three nucleotides in the order of C, C, and A to the tRNA nucleotide-73, using CTP and ATP as substrates and producing inorganic pyrophosphate. tRNA 3'-terminal CCA addition is required both for tRNA processing and repair. Also involved in tRNA surveillance by mediating tandem CCA addition to generate a CCACCA at the 3' terminus of unstable tRNAs. While stable tRNAs receive only 3'-terminal CCA, unstable tRNAs are marked with CCACCA and rapidly degraded. This chain is Multifunctional CCA protein, found in Sodalis glossinidius (strain morsitans).